A 271-amino-acid polypeptide reads, in one-letter code: Undecaprenyl-diphosphatase (271 aa).

8 helical membrane passes run 5 to 25 (LLIK…LPIS), 43 to 63 (FATM…VYYF), 80 to 100 (GFNL…IGIL), 109 to 129 (LFSP…MIVI), 145 to 165 (VSTS…FPGM), 186 to 206 (AEFS…FELV), 215 to 235 (LEWE…LIVV), and 246 to 266 (VLKP…FLIA).

Belongs to the UppP family.

The protein localises to the cell membrane. The catalysed reaction is di-trans,octa-cis-undecaprenyl diphosphate + H2O = di-trans,octa-cis-undecaprenyl phosphate + phosphate + H(+). Catalyzes the dephosphorylation of undecaprenyl diphosphate (UPP). Confers resistance to bacitracin. This chain is Undecaprenyl-diphosphatase, found in Caldanaerobacter subterraneus subsp. tengcongensis (strain DSM 15242 / JCM 11007 / NBRC 100824 / MB4) (Thermoanaerobacter tengcongensis).